The primary structure comprises 89 residues: Small ribosomal subunit protein uS14 (89 aa).

This sequence belongs to the universal ribosomal protein uS14 family. In terms of assembly, part of the 30S ribosomal subunit. Contacts proteins S3 and S10.

Binds 16S rRNA, required for the assembly of 30S particles and may also be responsible for determining the conformation of the 16S rRNA at the A site. The chain is Small ribosomal subunit protein uS14 from Shouchella clausii (strain KSM-K16) (Alkalihalobacillus clausii).